The sequence spans 633 residues: Copine-7 (633 aa).

2 C2 domains span residues 2 to 133 (SAGS…MRVS) and 212 to 339 (NAGK…AQWD). Residues D245, D251, D307, D309, and D315 each coordinate Ca(2+). The 200-residue stretch at 382-581 (HFTVAIDFTA…PALRDIVQFV (200 aa)) folds into the VWFA domain.

It belongs to the copine family. Ca(2+) serves as cofactor. In terms of tissue distribution, expressed in the brain, testis, thymus and small intestine.

The protein localises to the cytoplasm. It localises to the nucleus. The protein resides in the cell membrane. In terms of biological role, calcium-dependent phospholipid-binding protein that may play a role in calcium-mediated intracellular processes. The protein is Copine-7 of Homo sapiens (Human).